Here is a 320-residue protein sequence, read N- to C-terminus: Cytochrome f (320 aa).

The N-terminal stretch at Met1 to Ala35 is a signal peptide. Residues Tyr36, Cys56, Cys59, and His60 each coordinate heme. The helical transmembrane segment at Val286–Leu305 threads the bilayer.

This sequence belongs to the cytochrome f family. In terms of assembly, the 4 large subunits of the cytochrome b6-f complex are cytochrome b6, subunit IV (17 kDa polypeptide, petD), cytochrome f and the Rieske protein, while the 4 small subunits are PetG, PetL, PetM and PetN. The complex functions as a dimer. Requires heme as cofactor.

The protein localises to the plastid. Its subcellular location is the chloroplast thylakoid membrane. Functionally, component of the cytochrome b6-f complex, which mediates electron transfer between photosystem II (PSII) and photosystem I (PSI), cyclic electron flow around PSI, and state transitions. This is Cytochrome f (petA) from Arabidopsis thaliana (Mouse-ear cress).